The primary structure comprises 304 residues: DCN1-like protein 3 (304 aa).

Disordered regions lie at residues M1–S87 and E284–T304. G2 carries the N-myristoyl glycine lipid modification. One can recognise a DCUN1 domain in the interval S86–M278.

Part of a complex containing DCUN1D3, CUL3 and RBX1. Interacts (via the DCUN1 domain) with the unneddylated cullins: interacts with CUL1, CUL2, CUL3, CUL4A, CUL4B and CUL5; these interactions promote the cullin neddylation and the identity of the cullin dictates the affinity of the interaction. Interacts preferentially with CUL3; this interaction triggers the relocalization of CUL3 to the cell membrane where CUL3 is neddylated. Interacts (via DCUN1 domain) with RBX1. May also interact with regulators or subunits of cullin-RING ligases such as RNF7, ELOB and DDB1; these interactions are bridged by cullins. Interacts (via DCUN1 domain) with CAND1; this interaction is bridged by cullins and strongly inhibits cullin neddylation. These CAND-cullin-DCNL complexes can only be neddylated in the presence of a substrate adapter. Interacts (via DCUN1 domain) with the N-terminally acetylated form of UBE2M and UBE2F. Highest levels of expression are in the testis. Very low levels of expression in the heart, brain, skeletal muscle, kidney, liver, spleen, lung and ovary.

It is found in the cell membrane. Its subcellular location is the cytoplasm. The protein resides in the nucleus. The protein localises to the perinuclear region. Contributes to the neddylation of all cullins by transferring NEDD8 from N-terminally acetylated NEDD8-conjugating E2s enzyme to different cullin C-terminal domain-RBX complexes and may play a role in the cell cycle progression by regulating the SCF ubiquitin E3 ligase complex, after UV damage. At the cell membrane, can promote and as well inhibit cullins neddylation. In Mus musculus (Mouse), this protein is DCN1-like protein 3.